Reading from the N-terminus, the 349-residue chain is S-adenosylmethionine:tRNA ribosyltransferase-isomerase (349 aa).

The protein belongs to the QueA family. In terms of assembly, monomer.

The protein localises to the cytoplasm. The catalysed reaction is 7-aminomethyl-7-carbaguanosine(34) in tRNA + S-adenosyl-L-methionine = epoxyqueuosine(34) in tRNA + adenine + L-methionine + 2 H(+). Its pathway is tRNA modification; tRNA-queuosine biosynthesis. Its function is as follows. Transfers and isomerizes the ribose moiety from AdoMet to the 7-aminomethyl group of 7-deazaguanine (preQ1-tRNA) to give epoxyqueuosine (oQ-tRNA). This Parabacteroides distasonis (strain ATCC 8503 / DSM 20701 / CIP 104284 / JCM 5825 / NCTC 11152) protein is S-adenosylmethionine:tRNA ribosyltransferase-isomerase.